A 478-amino-acid polypeptide reads, in one-letter code: Proline--tRNA ligase (478 aa).

It belongs to the class-II aminoacyl-tRNA synthetase family. ProS type 3 subfamily. In terms of assembly, homodimer.

Its subcellular location is the cytoplasm. It carries out the reaction tRNA(Pro) + L-proline + ATP = L-prolyl-tRNA(Pro) + AMP + diphosphate. Functionally, catalyzes the attachment of proline to tRNA(Pro) in a two-step reaction: proline is first activated by ATP to form Pro-AMP and then transferred to the acceptor end of tRNA(Pro). In Methanococcoides burtonii (strain DSM 6242 / NBRC 107633 / OCM 468 / ACE-M), this protein is Proline--tRNA ligase.